A 356-amino-acid chain; its full sequence is Neutral protease 2 homolog MEP5 (356 aa).

An N-terminal signal peptide occupies residues methionine 1–alanine 19. Residues leucine 20 to arginine 179 constitute a propeptide that is removed on maturation. Intrachain disulfides connect cysteine 187–cysteine 259 and cysteine 266–cysteine 284. Position 308 (histidine 308) interacts with Zn(2+). Glutamate 309 is an active-site residue. Positions 312 and 323 each coordinate Zn(2+).

Belongs to the peptidase M35 family. Zn(2+) is required as a cofactor.

Its subcellular location is the secreted. The catalysed reaction is Preferential cleavage of bonds with hydrophobic residues in P1'. Also 3-Asn-|-Gln-4 and 8-Gly-|-Ser-9 bonds in insulin B chain.. Secreted metalloproteinase that allows assimilation of proteinaceous substrates. Shows high activities on basic nuclear substrates such as histone and protamine. May be involved in virulence. This is Neutral protease 2 homolog MEP5 (MEP5) from Coccidioides posadasii (strain C735) (Valley fever fungus).